A 457-amino-acid polypeptide reads, in one-letter code: Bifunctional protein GlmU (457 aa).

The tract at residues 1 to 230 is pyrophosphorylase; it reads MSKRYAVVLA…FEESLGVNDR (230 aa). UDP-N-acetyl-alpha-D-glucosamine is bound by residues 9–12, Lys23, Gln73, and 78–79; these read LAAG and GT. Asp103 contributes to the Mg(2+) binding site. The UDP-N-acetyl-alpha-D-glucosamine site is built by Gly140, Glu155, Asn170, and Asn228. Position 228 (Asn228) interacts with Mg(2+). The segment at 231 to 251 is linker; it reads IALAEASRLMQRRINENHMRN. The segment at 252–457 is N-acetyltransferase; that stretch reads GVTLVNPENT…GYAKHLNHGK (206 aa). The UDP-N-acetyl-alpha-D-glucosamine site is built by Arg333 and Lys351. The active-site Proton acceptor is the His363. UDP-N-acetyl-alpha-D-glucosamine is bound by residues Tyr366 and Asn377. Acetyl-CoA-binding positions include 386–387, Ala423, and Arg440; that span reads NY.

It in the N-terminal section; belongs to the N-acetylglucosamine-1-phosphate uridyltransferase family. This sequence in the C-terminal section; belongs to the transferase hexapeptide repeat family. In terms of assembly, homotrimer. The cofactor is Mg(2+).

Its subcellular location is the cytoplasm. The enzyme catalyses alpha-D-glucosamine 1-phosphate + acetyl-CoA = N-acetyl-alpha-D-glucosamine 1-phosphate + CoA + H(+). The catalysed reaction is N-acetyl-alpha-D-glucosamine 1-phosphate + UTP + H(+) = UDP-N-acetyl-alpha-D-glucosamine + diphosphate. It participates in nucleotide-sugar biosynthesis; UDP-N-acetyl-alpha-D-glucosamine biosynthesis; N-acetyl-alpha-D-glucosamine 1-phosphate from alpha-D-glucosamine 6-phosphate (route II): step 2/2. Its pathway is nucleotide-sugar biosynthesis; UDP-N-acetyl-alpha-D-glucosamine biosynthesis; UDP-N-acetyl-alpha-D-glucosamine from N-acetyl-alpha-D-glucosamine 1-phosphate: step 1/1. The protein operates within bacterial outer membrane biogenesis; LPS lipid A biosynthesis. Functionally, catalyzes the last two sequential reactions in the de novo biosynthetic pathway for UDP-N-acetylglucosamine (UDP-GlcNAc). The C-terminal domain catalyzes the transfer of acetyl group from acetyl coenzyme A to glucosamine-1-phosphate (GlcN-1-P) to produce N-acetylglucosamine-1-phosphate (GlcNAc-1-P), which is converted into UDP-GlcNAc by the transfer of uridine 5-monophosphate (from uridine 5-triphosphate), a reaction catalyzed by the N-terminal domain. This chain is Bifunctional protein GlmU, found in Listeria monocytogenes serotype 4b (strain F2365).